Consider the following 120-residue polypeptide: Non-specific lipid-transfer protein 1 (120 aa).

The N-terminal stretch at 1 to 25 (MARSMKLACVALVICMVVIAPMAEA) is a signal peptide. 4 cysteine pairs are disulfide-bonded: Cys29/Cys78, Cys39/Cys55, Cys56/Cys101, and Cys76/Cys115. A propeptide is located at residue Phe120.

Belongs to the plant LTP family. As to expression, expressed in roots, stem, leaves and tendrils of the mature plant.

Plant non-specific lipid-transfer proteins transfer phospholipids as well as galactolipids across membranes. May play a role in wax or cutin deposition in the cell walls of expanding epidermal cells and certain secretory tissues. Binds saturated and unsaturated lipids, jasmonic acid and lysolipids. Has antifungal activity against A.niger VKM F-2259 (IC(50)=40 uM), F.oxysporum TCXA-4 (IC(50)=20-40), F.solani VKM F-142 (IC(50)=20-40 uM) and N.crassa VKM F-184 (IC(50)=40 uM). Has weak antibacterial activity against A.tumefaciens A281, C.michiganensis VKM Ac-1144 and P.syringae VKM B-1546. The protein is Non-specific lipid-transfer protein 1 of Pisum sativum (Garden pea).